Consider the following 465-residue polypeptide: Hydroxyacid-oxoacid transhydrogenase, mitochondrial (465 aa).

Lys-443 is modified (N6-acetyllysine). Ser-450 is subject to Phosphoserine.

The protein belongs to the iron-containing alcohol dehydrogenase family. Hydroxyacid-oxoacid transhydrogenase subfamily. Expressed in white and brown adipose tissues, liver, and kidney. Expression is differentiation-dependent during in vitro brown and white adipogenesis.

The protein resides in the mitochondrion. The catalysed reaction is (S)-3-hydroxybutanoate + 2-oxoglutarate = (R)-2-hydroxyglutarate + acetoacetate. It carries out the reaction 4-hydroxybutanoate + 2-oxoglutarate = (R)-2-hydroxyglutarate + succinate semialdehyde. In terms of biological role, catalyzes the cofactor-independent reversible oxidation of gamma-hydroxybutyrate (GHB) to succinic semialdehyde (SSA) coupled to reduction of 2-ketoglutarate (2-KG) to D-2-hydroxyglutarate (D-2-HG). L-3-hydroxybutyrate (L-3-OHB) is also a substrate for HOT when using 2-KG as hydrogen acceptor, resulting in the formation of D-2-HG. This Mus musculus (Mouse) protein is Hydroxyacid-oxoacid transhydrogenase, mitochondrial (Adhfe1).